The chain runs to 343 residues: Malate dehydrogenase, peroxisomal (343 aa).

NAD(+) contacts are provided by residues 8 to 14 (GASGGVG) and aspartate 34. Substrate is bound by residues arginine 80 and arginine 86. NAD(+)-binding positions include asparagine 93 and 116–118 (ISN). Positions 118 and 152 each coordinate substrate. The Proton acceptor role is filled by histidine 187. Methionine 237 serves as a coordination point for NAD(+).

It belongs to the LDH/MDH superfamily. MDH type 1 family. In terms of assembly, homodimer.

Its subcellular location is the peroxisome. The enzyme catalyses (S)-malate + NAD(+) = oxaloacetate + NADH + H(+). In Saccharomyces cerevisiae (strain ATCC 204508 / S288c) (Baker's yeast), this protein is Malate dehydrogenase, peroxisomal (MDH3).